Consider the following 445-residue polypeptide: Argininosuccinate synthase (445 aa).

Residues 17 to 25 (AFSGGLDTS) and Ala43 contribute to the ATP site. Tyr99 contributes to the L-citrulline binding site. The ATP site is built by Gly129 and Thr131. Residues Thr131, Asn135, and Asp136 each coordinate L-aspartate. Asn135 serves as a coordination point for L-citrulline. Position 136 (Asp136) interacts with ATP. Arg139 and Ser192 together coordinate L-citrulline. Residue Asp194 participates in ATP binding. Thr201, Glu203, and Glu280 together coordinate L-citrulline.

Belongs to the argininosuccinate synthase family. Type 2 subfamily. In terms of assembly, homotetramer.

Its subcellular location is the cytoplasm. It catalyses the reaction L-citrulline + L-aspartate + ATP = 2-(N(omega)-L-arginino)succinate + AMP + diphosphate + H(+). It participates in amino-acid biosynthesis; L-arginine biosynthesis; L-arginine from L-ornithine and carbamoyl phosphate: step 2/3. This chain is Argininosuccinate synthase (argG), found in Ralstonia nicotianae (strain ATCC BAA-1114 / GMI1000) (Ralstonia solanacearum).